The primary structure comprises 162 residues: uncharacterized protein (162 aa).

This is an uncharacterized protein from Schizosaccharomyces pombe (strain 972 / ATCC 24843) (Fission yeast).